Here is a 370-residue protein sequence, read N- to C-terminus: Putative FBD-associated F-box protein At1g50980 (370 aa).

The 47-residue stretch at 31 to 77 (IRTISEFPDKVLLKILSLLPSKDVVATGVLSKRWRSLWKDVKTFRTS) folds into the F-box domain. Positions 292-343 (LMGNQPDLIPKSLSSHLEILEWRQYNDTAQEREAAKYILANASGLRKATFYT) constitute an FBD domain.

This Arabidopsis thaliana (Mouse-ear cress) protein is Putative FBD-associated F-box protein At1g50980.